A 382-amino-acid chain; its full sequence is Probable trehalose-phosphate phosphatase 2 (382 aa).

This sequence belongs to the trehalose phosphatase family. A divalent metal cation is required as a cofactor. Expressed in roots and shoots.

It catalyses the reaction alpha,alpha-trehalose 6-phosphate + H2O = alpha,alpha-trehalose + phosphate. It participates in glycan biosynthesis; trehalose biosynthesis. Functionally, removes the phosphate from trehalose 6-phosphate to produce free trehalose. Trehalose accumulation in plant may improve abiotic stress tolerance. This Oryza sativa subsp. japonica (Rice) protein is Probable trehalose-phosphate phosphatase 2 (TPP2).